A 209-amino-acid polypeptide reads, in one-letter code: uncharacterized protein (209 aa).

Positions 1 to 15 are enriched in basic and acidic residues; that stretch reads MHRIDTKTAQKDKFG. Residues 1–34 are disordered; the sequence is MHRIDTKTAQKDKFGAGKNGFTRGNPQTGTPATD. Residues 22 to 31 are compositionally biased toward polar residues; that stretch reads TRGNPQTGTP.

To E.coli YfdL and M.jannaschii MJ0347.

This is an uncharacterized protein from Escherichia coli (strain K12).